We begin with the raw amino-acid sequence, 485 residues long: Membrane-bound lytic murein transglycosylase F (485 aa).

Residues 1–29 form the signal peptide; sequence MFAHTALRQRCAKWLLATGLFLLLGACVE. The interval 30–267 is non-LT domain; the sequence is KPSTLERVKE…RLKDRYYGHV (238 aa). The segment at 268-485 is LT domain; the sequence is DVLGYVGAYT…DKPADKSSPM (218 aa). E314 is a catalytic residue. The interval 465-485 is disordered; that stretch reads EGNLHVPGVNKDKPADKSSPM. Positions 474 to 485 are enriched in basic and acidic residues; sequence NKDKPADKSSPM.

In the N-terminal section; belongs to the bacterial solute-binding protein 3 family. This sequence in the C-terminal section; belongs to the transglycosylase Slt family.

It localises to the cell outer membrane. The catalysed reaction is Exolytic cleavage of the (1-&gt;4)-beta-glycosidic linkage between N-acetylmuramic acid (MurNAc) and N-acetylglucosamine (GlcNAc) residues in peptidoglycan, from either the reducing or the non-reducing ends of the peptidoglycan chains, with concomitant formation of a 1,6-anhydrobond in the MurNAc residue.. Functionally, murein-degrading enzyme that degrades murein glycan strands and insoluble, high-molecular weight murein sacculi, with the concomitant formation of a 1,6-anhydromuramoyl product. Lytic transglycosylases (LTs) play an integral role in the metabolism of the peptidoglycan (PG) sacculus. Their lytic action creates space within the PG sacculus to allow for its expansion as well as for the insertion of various structures such as secretion systems and flagella. This is Membrane-bound lytic murein transglycosylase F from Pseudomonas putida (strain ATCC 700007 / DSM 6899 / JCM 31910 / BCRC 17059 / LMG 24140 / F1).